A 242-amino-acid polypeptide reads, in one-letter code: Prosalusin (242 aa).

The signal sequence occupies residues 1–26 (MAAATRGCRPWGSLLGLLGLVSAAAA). Positions 27-189 (AWDLASLRCT…SSWVVYGTNY (163 aa)) are excised as a propeptide. Residue 93–100 (GWTGTGKS) participates in ATP binding. The N-linked (GlcNAc...) asparagine glycan is linked to Asn-149. A disordered region spans residues 210–242 (PPRRSGALPPAPAAPRPALRAQRAGPAGPGAKG). Residues 225 to 235 (RPALRAQRAGP) are compositionally biased toward low complexity. At Lys-241 the chain carries Lysine amide.

Belongs to the ClpA/ClpB family. Torsin subfamily. Amidation of salusin-alpha(29-Gly) by peptidylglycine alpha-amidating monooxygenase, PAM, converts Lys-241-Gly-242 to Lys-241-NH2 and gives raise to salusin-alpha. Isoform 4 is ubiquitously expressed, with high level in vascular endothelial cells and vascular smooth muscle cells.

Its subcellular location is the secreted. Salusins -alpha and -beta may be endocrine and/or paracrine factors able to increase intracellular calcium concentrations and induce cell mitogenesis. Salusins may also be potent hypotensive peptides. The protein is Prosalusin (TOR2A) of Homo sapiens (Human).